Here is a 473-residue protein sequence, read N- to C-terminus: Inactive pancreatic lipase-related protein 1 (473 aa).

The N-terminal stretch at 1–17 is a signal peptide; the sequence is MLILWTIPLFLLGAAQG. Intrachain disulfides connect Cys-21–Cys-27 and Cys-109–Cys-120. The Nucleophile role is filled by Ser-171. The active-site Charge relay system is the Asp-194. Ca(2+) is bound by residues Glu-205, Arg-208, Asp-210, and Asp-213. Cys-255 and Cys-279 are oxidised to a cystine. His-281 (charge relay system) is an active-site residue. 3 disulfides stabilise this stretch: Cys-303–Cys-314, Cys-317–Cys-322, and Cys-451–Cys-467. One can recognise a PLAT domain in the interval 356–467; the sequence is WRYRVSLTFS…EDILLTLLPC (112 aa).

This sequence belongs to the AB hydrolase superfamily. Lipase family. In terms of tissue distribution, expressed in female, but not in male, lacrimal gland. Expressed in male and female sublingual gland and pancreas.

The protein localises to the secreted. In terms of biological role, may function as inhibitor of dietary triglyceride digestion. Lacks detectable lipase activity (in vitro). This Mus musculus (Mouse) protein is Inactive pancreatic lipase-related protein 1 (Pnliprp1).